We begin with the raw amino-acid sequence, 226 residues long: Cytidylate kinase (226 aa).

ATP is bound at residue 12–20; sequence GPSGAGKGT.

This sequence belongs to the cytidylate kinase family. Type 1 subfamily.

The protein localises to the cytoplasm. The catalysed reaction is CMP + ATP = CDP + ADP. It catalyses the reaction dCMP + ATP = dCDP + ADP. The protein is Cytidylate kinase of Xanthomonas campestris pv. campestris (strain 8004).